The following is a 477-amino-acid chain: Glutamate--tRNA ligase (477 aa).

A 'HIGH' region motif is present at residues 8-18 (PSPTGTLHIGT). A 'KMSKS' region motif is present at residues 247–251 (KLSKR). Residue lysine 250 participates in ATP binding.

It belongs to the class-I aminoacyl-tRNA synthetase family. Glutamate--tRNA ligase type 1 subfamily. Monomer.

The protein localises to the cytoplasm. The catalysed reaction is tRNA(Glu) + L-glutamate + ATP = L-glutamyl-tRNA(Glu) + AMP + diphosphate. Functionally, catalyzes the attachment of glutamate to tRNA(Glu) in a two-step reaction: glutamate is first activated by ATP to form Glu-AMP and then transferred to the acceptor end of tRNA(Glu). In Synechococcus sp. (strain CC9902), this protein is Glutamate--tRNA ligase.